We begin with the raw amino-acid sequence, 279 residues long: Esterase CG5412 (279 aa).

Active-site charge relay system residues include Ser133, Asp191, and His218. Residues 249-279 (QSGNASFVDSGAEDDNDAEVAAMTAELDESD) are disordered.

It belongs to the LovG family.

This chain is Esterase CG5412, found in Drosophila melanogaster (Fruit fly).